Reading from the N-terminus, the 884-residue chain is Translation initiation factor IF-2 (884 aa).

Residues valine 93 to glutamine 288 are disordered. The segment covering glutamate 99–tryptophan 209 has biased composition (basic and acidic residues). Residues glutamine 216–histidine 229 show a composition bias toward polar residues. Over residues arginine 231–arginine 246 the composition is skewed to basic and acidic residues. Positions serine 247–asparagine 261 are enriched in basic residues. Positions lysine 262 to alanine 275 are enriched in basic and acidic residues. Residues histidine 383–lysine 552 form the tr-type G domain. Residues glycine 392–threonine 399 form a G1 region. Glycine 392–threonine 399 provides a ligand contact to GTP. The segment at glycine 417–histidine 421 is G2. The G3 stretch occupies residues aspartate 438–glycine 441. GTP-binding positions include aspartate 438–histidine 442 and asparagine 492–aspartate 495. The interval asparagine 492–aspartate 495 is G4. Residues serine 528–lysine 530 form a G5 region.

The protein belongs to the TRAFAC class translation factor GTPase superfamily. Classic translation factor GTPase family. IF-2 subfamily.

The protein localises to the cytoplasm. In terms of biological role, one of the essential components for the initiation of protein synthesis. Protects formylmethionyl-tRNA from spontaneous hydrolysis and promotes its binding to the 30S ribosomal subunits. Also involved in the hydrolysis of GTP during the formation of the 70S ribosomal complex. This chain is Translation initiation factor IF-2, found in Yersinia pestis bv. Antiqua (strain Angola).